The chain runs to 385 residues: Interleukin-13 receptor subunit alpha-2 (385 aa).

The N-terminal stretch at Met1–Ser23 is a signal peptide. The Extracellular segment spans residues Leu24–Lys336. Fibronectin type-III domains are found at residues Pro30–Gly130, Gly133–Ser221, and Pro236–Asp334. Residues Cys61 and Cys109 are joined by a disulfide bond. A glycan (N-linked (GlcNAc...) asparagine) is linked at Asn111. Cys141 and Cys151 form a disulfide bridge. Residue Asn164 is glycosylated (N-linked (GlcNAc...) asparagine). A disulfide bridge connects residues Cys180 and Cys193. N-linked (GlcNAc...) asparagine glycosylation is found at Asn211 and Asn295. A disulfide bridge connects residues Cys265 and Cys312. Residues Trp318–Ser322 carry the WSXWS motif motif. Residues Ile337–Ile357 traverse the membrane as a helical segment. The Cytoplasmic portion of the chain corresponds to Val358–Cys385.

It belongs to the type I cytokine receptor family. Type 5 subfamily. Interacts with IL4RA. Interacts with high affinity to interleukin-13 (IL13), but not to interleukin-4 (IL4). Post-translationally, cleaved by MMP8 leading to a soluble form that is also able to interact with IL13.

It is found in the cell membrane. Its function is as follows. Cell surface receptor that plays a role in the regulation of IL-13-mediated responses. Functions as a decoy receptor that inhibits IL-13- and IL-4-mediated signal transduction via the JAK-STAT pathway and thereby modulates immune responses and inflammation. Serves as a functional signaling receptor for IL-13 in an alternative pathway involving AP-1 ultimately leading to the production of TGFB1. The chain is Interleukin-13 receptor subunit alpha-2 (Il13ra2) from Rattus norvegicus (Rat).